The following is a 225-amino-acid chain: UPF0758 protein Ssed_0385 (225 aa).

In terms of domain architecture, MPN spans 102-224 (ILSDPDLTRD…IVSFAERGWI (123 aa)). His-173, His-175, and Asp-186 together coordinate Zn(2+). Positions 173–186 (HNHPSGVAEPSLAD) match the JAMM motif motif.

Belongs to the UPF0758 family.

In Shewanella sediminis (strain HAW-EB3), this protein is UPF0758 protein Ssed_0385.